Reading from the N-terminus, the 150-residue chain is UPF0178 protein AZOSEA36080 (150 aa).

It belongs to the UPF0178 family.

The polypeptide is UPF0178 protein AZOSEA36080 (Aromatoleum aromaticum (strain DSM 19018 / LMG 30748 / EbN1) (Azoarcus sp. (strain EbN1))).